The sequence spans 194 residues: Large ribosomal subunit protein uL5 (194 aa).

It belongs to the universal ribosomal protein uL5 family. In terms of assembly, part of the 50S ribosomal subunit; part of the 5S rRNA/L5/L18/L25 subcomplex. Contacts the 5S rRNA and the P site tRNA. Forms a bridge to the 30S subunit in the 70S ribosome.

Its function is as follows. This is one of the proteins that bind and probably mediate the attachment of the 5S RNA into the large ribosomal subunit, where it forms part of the central protuberance. In the 70S ribosome it contacts protein S13 of the 30S subunit (bridge B1b), connecting the 2 subunits; this bridge is implicated in subunit movement. Contacts the P site tRNA; the 5S rRNA and some of its associated proteins might help stabilize positioning of ribosome-bound tRNAs. This is Large ribosomal subunit protein uL5 from Chlorobium luteolum (strain DSM 273 / BCRC 81028 / 2530) (Pelodictyon luteolum).